The primary structure comprises 349 residues: Probable myosin light chain kinase DDB_G0275057 (349 aa).

Positions 1–33 (MGCFNSKEAGAGRPKTTTQQQQQATPEPTVTTA) are disordered. The span at 16 to 33 (TTTQQQQQATPEPTVTTA) shows a compositional bias: low complexity. The region spanning 56–313 (YVVGKELGRG…AKQCLDDLWL (258 aa)) is the Protein kinase domain. ATP-binding positions include 62-70 (LGRGAFSVV) and Lys-85. Residue Asp-178 is the Proton acceptor of the active site.

This sequence belongs to the protein kinase superfamily. CAMK Ser/Thr protein kinase family. CaMK subfamily.

It catalyses the reaction L-seryl-[myosin light chain] + ATP = O-phospho-L-seryl-[myosin light chain] + ADP + H(+). The catalysed reaction is L-threonyl-[myosin light chain] + ATP = O-phospho-L-threonyl-[myosin light chain] + ADP + H(+). Does not have a calmodulin-binding domain. Functionally, may phosphorylate a specific serine in the N-terminus of a myosin light chain. This Dictyostelium discoideum (Social amoeba) protein is Probable myosin light chain kinase DDB_G0275057.